We begin with the raw amino-acid sequence, 320 residues long: D-alanine--D-alanine ligase (320 aa).

The 217-residue stretch at 101-317 (KMIFQGAGLP…FSELVCKILS (217 aa)) folds into the ATP-grasp domain. Residue 148–203 (INQLGLPLIVKPSREGSSFGMTKVEHLDQLDDALKKAWHYDEEILVEKWHFGTELT) participates in ATP binding. The Mg(2+) site is built by Asp-271, Glu-284, and Asn-286.

The protein belongs to the D-alanine--D-alanine ligase family. Requires Mg(2+) as cofactor. Mn(2+) is required as a cofactor.

It localises to the cytoplasm. It carries out the reaction 2 D-alanine + ATP = D-alanyl-D-alanine + ADP + phosphate + H(+). The protein operates within cell wall biogenesis; peptidoglycan biosynthesis. Its function is as follows. Cell wall formation. The protein is D-alanine--D-alanine ligase of Hamiltonella defensa subsp. Acyrthosiphon pisum (strain 5AT).